A 319-amino-acid polypeptide reads, in one-letter code: GTP 3',8-cyclase (319 aa).

Residues 4–219 (KHGRKINYLR…SKHSDLIPVE (216 aa)) enclose the Radical SAM core domain. Arg13 serves as a coordination point for GTP. Cys20 and Cys24 together coordinate [4Fe-4S] cluster. Tyr26 lines the S-adenosyl-L-methionine pocket. Cys27 lines the [4Fe-4S] cluster pocket. Arg63 provides a ligand contact to GTP. Gly67 is a binding site for S-adenosyl-L-methionine. Thr94 contacts GTP. An S-adenosyl-L-methionine-binding site is contributed by Ser118. A GTP-binding site is contributed by Lys155. Met189 lines the S-adenosyl-L-methionine pocket. Cys249 and Cys252 together coordinate [4Fe-4S] cluster. GTP is bound at residue 254-256 (RVR). Cys266 serves as a coordination point for [4Fe-4S] cluster.

The protein belongs to the radical SAM superfamily. MoaA family. As to quaternary structure, monomer and homodimer. Requires [4Fe-4S] cluster as cofactor.

The enzyme catalyses GTP + AH2 + S-adenosyl-L-methionine = (8S)-3',8-cyclo-7,8-dihydroguanosine 5'-triphosphate + 5'-deoxyadenosine + L-methionine + A + H(+). Its pathway is cofactor biosynthesis; molybdopterin biosynthesis. In terms of biological role, catalyzes the cyclization of GTP to (8S)-3',8-cyclo-7,8-dihydroguanosine 5'-triphosphate. The protein is GTP 3',8-cyclase of Clostridium botulinum (strain Okra / Type B1).